We begin with the raw amino-acid sequence, 370 residues long: UDP-galactose transporter homolog 1 (370 aa).

A run of 10 helical transmembrane segments spans residues 22–42, 62–82, 115–135, 145–165, 175–195, 204–224, 242–262, 280–300, 307–327, and 333–353; these read ALTLIICVCGLYGTFLTWSIL, IIINLIQALFASIIGFIYNYV, CNVLKFMILISITSSIASPIG, LAYLLAKSCKLIPVMIVHFIF, YLVAGLVTLGVILFTMAHVTT, TLLGLTYLIGSMILDGLTNST, LMSLLNLFIFIWTSLYTIIFH, LIDIIGFAICGAIGQVFIFII, IILITATVTRKMLSMILSVIL, and SWEQWVGVGLVFGGIGLEAFI.

The protein belongs to the nucleotide-sugar transporter family. SLC35B subfamily.

It is found in the endoplasmic reticulum membrane. Its function is as follows. May be involved in specific transport of UDP-Gal from the cytosol to the Golgi lumen. Involved in the maintenance of optimal conditions for the folding of secretory pathway proteins in the endoplasmic reticulum. The sequence is that of UDP-galactose transporter homolog 1 (HUT1) from Candida albicans (strain SC5314 / ATCC MYA-2876) (Yeast).